Reading from the N-terminus, the 159-residue chain is Transcription elongation factor GreA (159 aa).

Residues 7–72 (MTVRGAEKLR…IQEIESKLSN (66 aa)) adopt a coiled-coil conformation.

This sequence belongs to the GreA/GreB family.

Necessary for efficient RNA polymerase transcription elongation past template-encoded arresting sites. The arresting sites in DNA have the property of trapping a certain fraction of elongating RNA polymerases that pass through, resulting in locked ternary complexes. Cleavage of the nascent transcript by cleavage factors such as GreA or GreB allows the resumption of elongation from the new 3'terminus. GreA releases sequences of 2 to 3 nucleotides. In Buchnera aphidicola subsp. Schizaphis graminum (strain Sg), this protein is Transcription elongation factor GreA.